Reading from the N-terminus, the 184-residue chain is Photosystem I assembly protein Ycf4 (184 aa).

A run of 2 helical transmembrane segments spans residues 19–39 (ISNF…LLVG) and 57–77 (IIFF…LFIS).

It belongs to the Ycf4 family.

It is found in the plastid. The protein resides in the chloroplast thylakoid membrane. Seems to be required for the assembly of the photosystem I complex. The polypeptide is Photosystem I assembly protein Ycf4 (Cucumis sativus (Cucumber)).